Reading from the N-terminus, the 95-residue chain is Signal recognition particle 19 kDa protein (95 aa).

This sequence belongs to the SRP19 family. In terms of assembly, part of the signal recognition particle protein translocation system, which is composed of SRP and FtsY. Archaeal SRP consists of a 7S RNA molecule of 300 nucleotides and two protein subunits: SRP54 and SRP19.

The protein resides in the cytoplasm. Its function is as follows. Involved in targeting and insertion of nascent membrane proteins into the cytoplasmic membrane. Binds directly to 7S RNA and mediates binding of the 54 kDa subunit of the SRP. This chain is Signal recognition particle 19 kDa protein, found in Pyrobaculum islandicum (strain DSM 4184 / JCM 9189 / GEO3).